A 64-amino-acid polypeptide reads, in one-letter code: Large ribosomal subunit protein bL35 (64 aa).

The protein belongs to the bacterial ribosomal protein bL35 family.

The protein is Large ribosomal subunit protein bL35 of Colwellia psychrerythraea (strain 34H / ATCC BAA-681) (Vibrio psychroerythus).